Consider the following 131-residue polypeptide: Runt-related transcription factor 2 (131 aa).

The Runt domain maps to 1–10 (MRVGVPPQIP). The interval 1–75 (MRVGVPPQIP…SSTRGTGLPV (75 aa)) is disordered. The residue at position 11 (arginine 11) is an Asymmetric dimethylarginine. Composition is skewed to polar residues over residues 13–36 (SLNSAPSPFNPQGQSQITDPRQAQ) and 43–70 (YDQSYPSYLSQMTSPSIHSTTPLSSTRG).

As to quaternary structure, heterodimer of an alpha and a beta subunit. The alpha subunit binds DNA as a monomer and through the Runt domain. DNA-binding is increased by heterodimerization. Interacts with XRCC6 (Ku70) and XRCC5 (Ku80). Interacts with CCNB1, KAT6A and KAT6B. Interacts with HIVEP3. Interacts with IFI204. Interaction with SATB2; the interaction results in enhanced DNA binding and transactivation by these transcription factors. Binds to HIPK3. Interacts with FOXO1 (via a C-terminal region); the interaction inhibits RUNX2 transcriptional activity towards BGLAP. This interaction is prevented on insulin or IGF1 stimulation as FOXO1 is exported from the nucleus. Interacts with FOXP3. Interacts with TMEM119. Interacts with OLFM2. Interacts with IPO7; the interaction inhibits RUNX2 nuclear translocation in osteoblasts. Phosphorylated; probably by MAP kinases (MAPK). Phosphorylation by HIPK3 is required for the SPEN/MINT and FGF2 transactivation during osteoblastic differentiation.

It localises to the nucleus. The protein resides in the cytoplasm. Transcription factor involved in osteoblastic differentiation and skeletal morphogenesis. Essential for the maturation of osteoblasts and both intramembranous and endochondral ossification. CBF binds to the core site, 5'-PYGPYGGT-3', of a number of enhancers and promoters, including murine leukemia virus, polyomavirus enhancer, T-cell receptor enhancers, osteocalcin, osteopontin, bone sialoprotein, alpha 1(I) collagen, LCK, IL-3 and GM-CSF promoters. Inhibits KAT6B-dependent transcriptional activation. In osteoblasts, supports transcription activation: synergizes with SPEN/MINT to enhance FGFR2-mediated activation of the osteocalcin FGF-responsive element (OCFRE). This is Runt-related transcription factor 2 (RUNX2) from Equus caballus (Horse).